The following is a 473-amino-acid chain: Methionine aminopeptidase 2 (473 aa).

Residues 23-121 form a disordered region; sequence LAEDSSNGTQ…KLVSIDQSYP (99 aa). Residues 41 to 53 show a composition bias toward polar residues; the sequence is KATTAVGQDNGNN. Positions 73 to 83 are enriched in acidic residues; it reads DDDDDDEDDDV. A compositionally biased stretch (low complexity) spans 84–93; it reads AAAAAAVGDA. The segment covering 97–113 has biased composition (basic residues); it reads KKKKKKKSSNKKKKKKL. His-224 is a binding site for substrate. Positions 244, 255, and 326 each coordinate a divalent metal cation. Residue His-334 participates in substrate binding. 2 residues coordinate a divalent metal cation: Glu-359 and Glu-454.

The protein belongs to the peptidase M24A family. Methionine aminopeptidase eukaryotic type 2 subfamily. Co(2+) serves as cofactor. The cofactor is Zn(2+). Requires Mn(2+) as cofactor. It depends on Fe(2+) as a cofactor.

It localises to the cytoplasm. The enzyme catalyses Release of N-terminal amino acids, preferentially methionine, from peptides and arylamides.. Functionally, cotranslationally removes the N-terminal methionine from nascent proteins. The N-terminal methionine is often cleaved when the second residue in the primary sequence is small and uncharged (Met-Ala-, Cys, Gly, Pro, Ser, Thr, or Val). This is Methionine aminopeptidase 2 from Lodderomyces elongisporus (strain ATCC 11503 / CBS 2605 / JCM 1781 / NBRC 1676 / NRRL YB-4239) (Yeast).